The following is a 181-amino-acid chain: Acireductone dioxygenase (181 aa).

Positions 97, 99, 103, and 141 each coordinate Fe(2+). Ni(2+) is bound by residues His-97, His-99, Glu-103, and His-141.

This sequence belongs to the acireductone dioxygenase (ARD) family. In terms of assembly, monomer. The cofactor is Fe(2+). Requires Ni(2+) as cofactor.

It carries out the reaction 1,2-dihydroxy-5-(methylsulfanyl)pent-1-en-3-one + O2 = 3-(methylsulfanyl)propanoate + CO + formate + 2 H(+). The catalysed reaction is 1,2-dihydroxy-5-(methylsulfanyl)pent-1-en-3-one + O2 = 4-methylsulfanyl-2-oxobutanoate + formate + 2 H(+). It functions in the pathway amino-acid biosynthesis; L-methionine biosynthesis via salvage pathway; L-methionine from S-methyl-5-thio-alpha-D-ribose 1-phosphate: step 5/6. Its function is as follows. Catalyzes 2 different reactions between oxygen and the acireductone 1,2-dihydroxy-3-keto-5-methylthiopentene (DHK-MTPene) depending upon the metal bound in the active site. Fe-containing acireductone dioxygenase (Fe-ARD) produces formate and 2-keto-4-methylthiobutyrate (KMTB), the alpha-ketoacid precursor of methionine in the methionine recycle pathway. Ni-containing acireductone dioxygenase (Ni-ARD) produces methylthiopropionate, carbon monoxide and formate, and does not lie on the methionine recycle pathway. This Pseudomonas fluorescens (strain ATCC BAA-477 / NRRL B-23932 / Pf-5) protein is Acireductone dioxygenase.